Consider the following 215-residue polypeptide: Cytidylate kinase (215 aa).

Residue 10 to 18 participates in ATP binding; that stretch reads GPAASGKGT.

The protein belongs to the cytidylate kinase family. Type 1 subfamily.

It is found in the cytoplasm. The catalysed reaction is CMP + ATP = CDP + ADP. The enzyme catalyses dCMP + ATP = dCDP + ADP. This is Cytidylate kinase from Bartonella bacilliformis (strain ATCC 35685 / KC583 / Herrer 020/F12,63).